A 318-amino-acid polypeptide reads, in one-letter code: 4-hydroxy-3-methylbut-2-enyl diphosphate reductase (318 aa).

[4Fe-4S] cluster is bound at residue Cys-12. His-41 and His-74 together coordinate (2E)-4-hydroxy-3-methylbut-2-enyl diphosphate. 2 residues coordinate dimethylallyl diphosphate: His-41 and His-74. Positions 41 and 74 each coordinate isopentenyl diphosphate. Residue Cys-96 coordinates [4Fe-4S] cluster. Position 124 (His-124) interacts with (2E)-4-hydroxy-3-methylbut-2-enyl diphosphate. His-124 contacts dimethylallyl diphosphate. His-124 lines the isopentenyl diphosphate pocket. The active-site Proton donor is the Glu-126. Thr-168 provides a ligand contact to (2E)-4-hydroxy-3-methylbut-2-enyl diphosphate. [4Fe-4S] cluster is bound at residue Cys-198. 4 residues coordinate (2E)-4-hydroxy-3-methylbut-2-enyl diphosphate: Ser-226, Ser-227, Asn-228, and Ser-270. Dimethylallyl diphosphate-binding residues include Ser-226, Ser-227, Asn-228, and Ser-270. 4 residues coordinate isopentenyl diphosphate: Ser-226, Ser-227, Asn-228, and Ser-270.

Belongs to the IspH family. [4Fe-4S] cluster is required as a cofactor.

It carries out the reaction isopentenyl diphosphate + 2 oxidized [2Fe-2S]-[ferredoxin] + H2O = (2E)-4-hydroxy-3-methylbut-2-enyl diphosphate + 2 reduced [2Fe-2S]-[ferredoxin] + 2 H(+). It catalyses the reaction dimethylallyl diphosphate + 2 oxidized [2Fe-2S]-[ferredoxin] + H2O = (2E)-4-hydroxy-3-methylbut-2-enyl diphosphate + 2 reduced [2Fe-2S]-[ferredoxin] + 2 H(+). It participates in isoprenoid biosynthesis; dimethylallyl diphosphate biosynthesis; dimethylallyl diphosphate from (2E)-4-hydroxy-3-methylbutenyl diphosphate: step 1/1. The protein operates within isoprenoid biosynthesis; isopentenyl diphosphate biosynthesis via DXP pathway; isopentenyl diphosphate from 1-deoxy-D-xylulose 5-phosphate: step 6/6. Catalyzes the conversion of 1-hydroxy-2-methyl-2-(E)-butenyl 4-diphosphate (HMBPP) into a mixture of isopentenyl diphosphate (IPP) and dimethylallyl diphosphate (DMAPP). Acts in the terminal step of the DOXP/MEP pathway for isoprenoid precursor biosynthesis. The sequence is that of 4-hydroxy-3-methylbut-2-enyl diphosphate reductase from Psychrobacter arcticus (strain DSM 17307 / VKM B-2377 / 273-4).